The sequence spans 297 residues: Ribosomal RNA small subunit methyltransferase A (297 aa).

Residues Asn28, Leu30, Gly55, Glu76, Asp101, and Asn126 each contribute to the S-adenosyl-L-methionine site.

The protein belongs to the class I-like SAM-binding methyltransferase superfamily. rRNA adenine N(6)-methyltransferase family. RsmA subfamily.

It is found in the cytoplasm. The catalysed reaction is adenosine(1518)/adenosine(1519) in 16S rRNA + 4 S-adenosyl-L-methionine = N(6)-dimethyladenosine(1518)/N(6)-dimethyladenosine(1519) in 16S rRNA + 4 S-adenosyl-L-homocysteine + 4 H(+). In terms of biological role, specifically dimethylates two adjacent adenosines (A1518 and A1519) in the loop of a conserved hairpin near the 3'-end of 16S rRNA in the 30S particle. May play a critical role in biogenesis of 30S subunits. This is Ribosomal RNA small subunit methyltransferase A from Latilactobacillus sakei subsp. sakei (strain 23K) (Lactobacillus sakei subsp. sakei).